We begin with the raw amino-acid sequence, 179 residues long: Apoptosis regulator DPV022 (179 aa).

A helical transmembrane segment spans residues 148–170 (VLITNYLKITIFGAILGITAYYI).

In terms of assembly, interacts with host BAX and BAK1.

It is found in the host mitochondrion. The protein localises to the host membrane. Functionally, plays a role in the inhibition of host apoptosis by sequestering and inactivating several proapoptotic BCL-2 proteins, including BAK1 and BAX. Prevents the conformational activation of both of them. The polypeptide is Apoptosis regulator DPV022 (DPV022) (Deerpox virus (strain Mule deer/United States/W-848-83/1983) (DPV)).